Here is a 325-residue protein sequence, read N- to C-terminus: tRNA N(3)-methylcytidine methyltransferase Mettl2 (325 aa).

The S-adenosyl-L-methionine site is built by Trp96 and Tyr100. Residues Tyr100, His112, Glu138, Gly140, Asp165, Asp191, and Ile212 each coordinate S-adenosyl-L-homocysteine. S-adenosyl-L-methionine-binding residues include Gly140, Asp165, Asp191, and Ile212.

Belongs to the methyltransferase superfamily. METL family. Interacts with Psn. As to expression, widely expressed. Expressed in ovaries, head, thorax and abdomen of adult flies, and in the CNS of third instar larvae. Isoform 2 is predominantly expressed in larvae and in adult tissues that have been tested.

In terms of biological role, probable methyltransferase. The chain is tRNA N(3)-methylcytidine methyltransferase Mettl2 from Drosophila melanogaster (Fruit fly).